A 754-amino-acid chain; its full sequence is 84 kDa readthrough protein (754 aa).

Disordered stretches follow at residues 103-131 (RGEGAQTRNAKRGAAPGTSQVENEEQGQT) and 713-740 (KNTRMYPSTSGQSYNSYKSPRVSGKSGV). Residues 713 to 730 (KNTRMYPSTSGQSYNSYK) show a composition bias toward polar residues.

Belongs to the virgaviridae capsid protein family.

Its subcellular location is the virion. Minor capsid protein involved in virus transmission by the vector. The protein is 84 kDa readthrough protein (CP-CP2) of Soil-borne wheat mosaic virus (strain United States/Nebraska/1981) (SBWMV).